The chain runs to 308 residues: Small ribosomal subunit protein uS2 (308 aa).

At Ser2 the chain carries N-acetylserine. Laminin-binding stretches follow at residues 161-180 (IPCN…MLAR) and 205-229 (RDPE…EFQG). 5 [DE]-W-[ST] repeats span residues 230–232 (EWT), 245–247 (DWS), 279–281 (DWS), 288–290 (DWS), and 306–308 (DWS). The tract at residues 242–308 (EVADWSEGVQ…DWGGATADWS (67 aa)) is laminin-binding. The tract at residues 262-308 (AGIEAPGKPAPAEVYAEDWSAQPATEDWSAAPTAQAGDWGGATADWS) is disordered.

The protein belongs to the universal ribosomal protein uS2 family. As to quaternary structure, monomer (37LRP) and homodimer (67LR). Component of the small ribosomal subunit. Mature ribosomes consist of a small (40S) and a large (60S) subunit. The 40S subunit contains about 33 different proteins and 1 molecule of RNA (18S). The 60S subunit contains about 49 different proteins and 3 molecules of RNA (28S, 5.8S and 5S). Interacts with rps21. Interacts with several laminins including at least lamb1. Interacts with mdk. Acylated. Acylation may be a prerequisite for conversion of the monomeric 37 kDa laminin receptor precursor (37LRP) to the mature dimeric 67 kDa laminin receptor (67LR), and may provide a mechanism for membrane association. Post-translationally, cleaved by stromelysin-3 (ST3) at the cell surface. Cleavage by stromelysin-3 may be a mechanism to alter cell-extracellular matrix interactions.

The protein localises to the cell membrane. It localises to the cytoplasm. It is found in the nucleus. In terms of biological role, required for the assembly and/or stability of the 40S ribosomal subunit. Required for the processing of the 20S rRNA-precursor to mature 18S rRNA in a late step of the maturation of 40S ribosomal subunits. Also functions as a cell surface receptor for laminin. Plays a role in cell adhesion to the basement membrane and in the consequent activation of signaling transduction pathways. May play a role in cell fate determination and tissue morphogenesis. The chain is Small ribosomal subunit protein uS2 (rpsa) from Danio rerio (Zebrafish).